A 204-amino-acid polypeptide reads, in one-letter code: RNA-free ribonuclease P (204 aa).

It belongs to the HARP family.

It catalyses the reaction Endonucleolytic cleavage of RNA, removing 5'-extranucleotides from tRNA precursor.. Its function is as follows. RNA-free RNase P that catalyzes the removal of the 5'-leader sequence from pre-tRNA to produce the mature 5'-terminus. The sequence is that of RNA-free ribonuclease P from Pyrococcus horikoshii (strain ATCC 700860 / DSM 12428 / JCM 9974 / NBRC 100139 / OT-3).